The sequence spans 294 residues: ATP phosphoribosyltransferase (294 aa).

It belongs to the ATP phosphoribosyltransferase family. Long subfamily. Requires Mg(2+) as cofactor.

It is found in the cytoplasm. It carries out the reaction 1-(5-phospho-beta-D-ribosyl)-ATP + diphosphate = 5-phospho-alpha-D-ribose 1-diphosphate + ATP. It functions in the pathway amino-acid biosynthesis; L-histidine biosynthesis; L-histidine from 5-phospho-alpha-D-ribose 1-diphosphate: step 1/9. Feedback inhibited by histidine. Its function is as follows. Catalyzes the condensation of ATP and 5-phosphoribose 1-diphosphate to form N'-(5'-phosphoribosyl)-ATP (PR-ATP). Has a crucial role in the pathway because the rate of histidine biosynthesis seems to be controlled primarily by regulation of HisG enzymatic activity. The sequence is that of ATP phosphoribosyltransferase from Maricaulis maris (strain MCS10) (Caulobacter maris).